A 707-amino-acid polypeptide reads, in one-letter code: Transcription termination factor Rho (707 aa).

Disordered regions lie at residues 1-38 (MSDT…RRGT) and 76-321 (QAAG…DEIQ). 2 stretches are compositionally biased toward low complexity: residues 16–31 (AAAP…TGAG) and 76–93 (QAAG…ADTA). Positions 107–132 (RTGDEAPAEKAEKAGKADKKADKAAA) are enriched in basic and acidic residues. Over residues 153-163 (ASAEQAAPADD) the composition is skewed to low complexity. A compositionally biased stretch (polar residues) spans 176–188 (DAGSPSATDTTVA). The segment covering 203 to 213 (QQSQGHQQGQG) has biased composition (low complexity). Residues 215-265 (ARSDAEGGDGRRRDRRDRGDRDRGDRGDRGDRGDRGDRGERGRDRRNKGDD) show a composition bias toward basic and acidic residues. Residues 301 to 315 (RRGRRGRYRDRRGRR) show a composition bias toward basic residues. The Rho RNA-BD domain occupies 331 to 406 (LIPVAGILDI…VRLDSVNGMA (76 aa)). ATP is bound by residues 449-454 (GKGQRG), 461-466 (KTGKTM), and R492.

Belongs to the Rho family. Homohexamer. The homohexamer assembles into an open ring structure.

Functionally, facilitates transcription termination by a mechanism that involves Rho binding to the nascent RNA, activation of Rho's RNA-dependent ATPase activity, and release of the mRNA from the DNA template. This is Transcription termination factor Rho from Streptomyces lividans.